Consider the following 88-residue polypeptide: UPF0223 protein BH2638 (88 aa).

This sequence belongs to the UPF0223 family.

The polypeptide is UPF0223 protein BH2638 (Halalkalibacterium halodurans (strain ATCC BAA-125 / DSM 18197 / FERM 7344 / JCM 9153 / C-125) (Bacillus halodurans)).